The primary structure comprises 78 residues: Large ribosomal subunit protein bL28 (78 aa).

This sequence belongs to the bacterial ribosomal protein bL28 family.

In Haemophilus influenzae (strain 86-028NP), this protein is Large ribosomal subunit protein bL28.